The chain runs to 366 residues: UDP-N-acetylglucosamine--N-acetylmuramyl-(pentapeptide) pyrophosphoryl-undecaprenol N-acetylglucosamine transferase (366 aa).

Residues 17–19, Asn-129, Arg-169, Ser-195, Ile-251, 270–275, and Gln-296 each bind UDP-N-acetyl-alpha-D-glucosamine; these read TGG and ALTVSE.

This sequence belongs to the glycosyltransferase 28 family. MurG subfamily.

Its subcellular location is the cell inner membrane. The catalysed reaction is di-trans,octa-cis-undecaprenyl diphospho-N-acetyl-alpha-D-muramoyl-L-alanyl-D-glutamyl-meso-2,6-diaminopimeloyl-D-alanyl-D-alanine + UDP-N-acetyl-alpha-D-glucosamine = di-trans,octa-cis-undecaprenyl diphospho-[N-acetyl-alpha-D-glucosaminyl-(1-&gt;4)]-N-acetyl-alpha-D-muramoyl-L-alanyl-D-glutamyl-meso-2,6-diaminopimeloyl-D-alanyl-D-alanine + UDP + H(+). It participates in cell wall biogenesis; peptidoglycan biosynthesis. In terms of biological role, cell wall formation. Catalyzes the transfer of a GlcNAc subunit on undecaprenyl-pyrophosphoryl-MurNAc-pentapeptide (lipid intermediate I) to form undecaprenyl-pyrophosphoryl-MurNAc-(pentapeptide)GlcNAc (lipid intermediate II). This Shewanella denitrificans (strain OS217 / ATCC BAA-1090 / DSM 15013) protein is UDP-N-acetylglucosamine--N-acetylmuramyl-(pentapeptide) pyrophosphoryl-undecaprenol N-acetylglucosamine transferase.